The primary structure comprises 837 residues: Translation initiation factor IF-2 (837 aa).

A disordered region spans residues 94–253; that stretch reads KRSPDEIEAE…QHGFQNPTGP (160 aa). The span at 95–148 shows a compositional bias: basic and acidic residues; that stretch reads RSPDEIEAERQRELEEQRAAEEAERLKAEEAAARQRAEEEARKAEEAARAKAAE. Positions 149–171 are enriched in low complexity; it reads EAVSAQPAAAVEVAAAEPVAKPA. Composition is skewed to basic and acidic residues over residues 172 to 188 and 220 to 229; these read AAEE…PKRD and STDEESDGYR. Residues 230–244 are compositionally biased toward basic residues; that stretch reads RGGRGGKSKLKKRNQ. The tr-type G domain occupies 337–506; the sequence is TRAPVVTVMG…LLQAEVLELK (170 aa). Positions 346–353 are G1; it reads GHVDHGKT. 346 to 353 lines the GTP pocket; sequence GHVDHGKT. The tract at residues 371-375 is G2; sequence GITQH. The segment at 392–395 is G3; sequence DTPG. GTP contacts are provided by residues 392–396 and 446–449; these read DTPGH and NKID. Residues 446–449 form a G4 region; sequence NKID. The interval 482-484 is G5; it reads SAK.

The protein belongs to the TRAFAC class translation factor GTPase superfamily. Classic translation factor GTPase family. IF-2 subfamily.

It localises to the cytoplasm. In terms of biological role, one of the essential components for the initiation of protein synthesis. Protects formylmethionyl-tRNA from spontaneous hydrolysis and promotes its binding to the 30S ribosomal subunits. Also involved in the hydrolysis of GTP during the formation of the 70S ribosomal complex. This Pseudomonas paraeruginosa (strain DSM 24068 / PA7) (Pseudomonas aeruginosa (strain PA7)) protein is Translation initiation factor IF-2.